The following is a 587-amino-acid chain: 2-succinyl-5-enolpyruvyl-6-hydroxy-3-cyclohexene-1-carboxylate synthase (587 aa).

Belongs to the TPP enzyme family. MenD subfamily. As to quaternary structure, homodimer. Requires Mg(2+) as cofactor. Mn(2+) serves as cofactor. The cofactor is thiamine diphosphate.

The catalysed reaction is isochorismate + 2-oxoglutarate + H(+) = 5-enolpyruvoyl-6-hydroxy-2-succinyl-cyclohex-3-ene-1-carboxylate + CO2. Its pathway is quinol/quinone metabolism; 1,4-dihydroxy-2-naphthoate biosynthesis; 1,4-dihydroxy-2-naphthoate from chorismate: step 2/7. It functions in the pathway cofactor biosynthesis; phylloquinone biosynthesis. Its function is as follows. Catalyzes the thiamine diphosphate-dependent decarboxylation of 2-oxoglutarate and the subsequent addition of the resulting succinic semialdehyde-thiamine pyrophosphate anion to isochorismate to yield 2-succinyl-5-enolpyruvyl-6-hydroxy-3-cyclohexene-1-carboxylate (SEPHCHC). The polypeptide is 2-succinyl-5-enolpyruvyl-6-hydroxy-3-cyclohexene-1-carboxylate synthase (Prochlorococcus marinus (strain MIT 9312)).